A 416-amino-acid chain; its full sequence is Gamma-glutamyl phosphate reductase (416 aa).

The protein belongs to the gamma-glutamyl phosphate reductase family.

It is found in the cytoplasm. It carries out the reaction L-glutamate 5-semialdehyde + phosphate + NADP(+) = L-glutamyl 5-phosphate + NADPH + H(+). It functions in the pathway amino-acid biosynthesis; L-proline biosynthesis; L-glutamate 5-semialdehyde from L-glutamate: step 2/2. In terms of biological role, catalyzes the NADPH-dependent reduction of L-glutamate 5-phosphate into L-glutamate 5-semialdehyde and phosphate. The product spontaneously undergoes cyclization to form 1-pyrroline-5-carboxylate. This Vibrio vulnificus (strain YJ016) protein is Gamma-glutamyl phosphate reductase.